The following is a 225-amino-acid chain: Uracil-DNA glycosylase (225 aa).

Catalysis depends on aspartate 65, which acts as the Proton acceptor.

Belongs to the uracil-DNA glycosylase (UDG) superfamily. UNG family.

The protein localises to the cytoplasm. The enzyme catalyses Hydrolyzes single-stranded DNA or mismatched double-stranded DNA and polynucleotides, releasing free uracil.. Its function is as follows. Excises uracil residues from the DNA which can arise as a result of misincorporation of dUMP residues by DNA polymerase or due to deamination of cytosine. The sequence is that of Uracil-DNA glycosylase from Lysinibacillus sphaericus (strain C3-41).